Reading from the N-terminus, the 105-residue chain is Fungal protease inhibitor-1 (105 aa).

Residues 1–19 (MKAVITLLFLACILVVTYG) form the signal peptide. 6 disulfide bridges follow: C23-C56, C28-C58, C33-C59, C42-C62, C72-C93, and C87-C98.

Inhibits proteases from the fungi A.oryzae and R.oryzae, trypsin and chymotrypsin. Does not inhibit protease from the bacterium B.licheniformis or papain. The polypeptide is Fungal protease inhibitor-1 (Antheraea mylitta (Tasar silkworm)).